A 216-amino-acid chain; its full sequence is Adenylate kinase (216 aa).

ATP is bound at residue 13 to 18; that stretch reads GAGKGT. The NMP stretch occupies residues 33 to 66; that stretch reads TTGDALRANKTKDITHLDVEYDTPGAYMDAGELV. AMP contacts are provided by residues Thr34, Arg39, 64–66, 89–92, and Gln96; these read ELV and GYPR. The segment at 125–162 is LID; the sequence is GRRVCEDCGATFHVSFNQPETEGVCDACGGSLYQREDD. Arg126 is a binding site for ATP. Zn(2+) contacts are provided by Cys129 and Cys132. An ATP-binding site is contributed by 135 to 136; it reads TF. The Zn(2+) site is built by Cys149 and Cys152. Positions 159 and 170 each coordinate AMP. Residue Arg198 coordinates ATP.

Belongs to the adenylate kinase family. As to quaternary structure, monomer.

It is found in the cytoplasm. The enzyme catalyses AMP + ATP = 2 ADP. Its pathway is purine metabolism; AMP biosynthesis via salvage pathway; AMP from ADP: step 1/1. Catalyzes the reversible transfer of the terminal phosphate group between ATP and AMP. Plays an important role in cellular energy homeostasis and in adenine nucleotide metabolism. This is Adenylate kinase from Halobacterium salinarum (strain ATCC 700922 / JCM 11081 / NRC-1) (Halobacterium halobium).